The chain runs to 211 residues: Protein FAM167A (211 aa).

2 disordered regions span residues 1-30 (MSVPQIQVEEVAGGEEGPAGTTPPPDDHLR) and 56-108 (EEQT…GKLE). Residues 120-153 (LRKELMEMRLQDQQLARQLMRLRSDIHKLKIEQT) adopt a coiled-coil conformation.

This sequence belongs to the FAM167 (SEC) family.

This chain is Protein FAM167A (FAM167A), found in Bos taurus (Bovine).